The primary structure comprises 183 residues: Ribulose bisphosphate carboxylase small subunit, chloroplastic 1 (183 aa).

Residues 1–58 constitute a chloroplast transit peptide; the sequence is MASSMLSNAAMATTAATAGAQASMVAPFNGLKSFATFPITKKSSNDFSSLPSNGGRVQ.

It belongs to the RuBisCO small chain family. In terms of assembly, heterohexadecamer of 8 large and 8 small subunits.

Its subcellular location is the plastid. It is found in the chloroplast. Functionally, ruBisCO catalyzes two reactions: the carboxylation of D-ribulose 1,5-bisphosphate, the primary event in carbon dioxide fixation, as well as the oxidative fragmentation of the pentose substrate. Both reactions occur simultaneously and in competition at the same active site. Although the small subunit is not catalytic it is essential for maximal activity. This is Ribulose bisphosphate carboxylase small subunit, chloroplastic 1 from Amaranthus hypochondriacus (Prince-of-Wales feather).